Reading from the N-terminus, the 315-residue chain is Calcium homeostasis modulator protein 6 (315 aa).

The Cytoplasmic segment spans residues 1-21; sequence MEKFKAVLDLQIKHRSALGYG. The helical transmembrane segment at 22 to 37 threads the bilayer; it reads LVTLLTAGGEKIFSTV. At 38–46 the chain is on the extracellular side; the sequence is VFQCPCTAT. Disulfide bonds link Cys-41–Cys-127, Cys-43–Cys-156, and Cys-140–Cys-147. Residues 47–68 traverse the membrane as a helical segment; sequence LNLTYGLVFLLVPALALFLLGY. Topologically, residues 69-103 are cytoplasmic; it reads ALSARTWRLLTGCCSRSASTRSSSGLRSTLVCAQV. The helical transmembrane segment at 104–128 threads the bilayer; sequence SAVAALAPLTWVAVALLGGSFYQCA. Residues 129–169 lie on the Extracellular side of the membrane; sequence VSGSTRLASYLCKDRNHSCIAKLPQVPCNKQEAEMQEILSQ. Residues 170–192 traverse the membrane as a helical segment; sequence LKAQSQVLGWVLIAAVIFLLLVF. At 193 to 315 the chain is on the cytoplasmic side; that stretch reads KCVSRCFSPV…DAAMANTHGV (123 aa).

It belongs to the CALHM family. In terms of assembly, oligomerizes to form decameric and undecameric channels.

It localises to the cell membrane. The catalysed reaction is ATP(in) = ATP(out). Its function is as follows. Pore-forming subunit of an ATP-permeable channel. In response to pathogen-derived and proinflammatory stimuli, relocates from intracellular compartments to NK-dendritic cell and NK-macrophage immune synapses where it mediates ATP efflux and NK cell activation involved in antimicrobial and antitumor responses. May assemble to form gap junction channel-like structures with gating and ion conductance likely regulated by membrane lipids and voltage rather than by extracellular calcium levels. This chain is Calcium homeostasis modulator protein 6, found in Rattus norvegicus (Rat).